The following is a 128-amino-acid chain: Holin-like protein CidA (128 aa).

A run of 4 helical transmembrane segments spans residues 4–24, 26–46, 59–79, and 88–108; these read LLLTVIQIALLFIFARLINWV, ALLHINIPGSIIGIVILFTLL, GAAWLLGELLLFFIPSAVGVI, and FGVSILLVVIISTFVVMVSTG.

Belongs to the CidA/LrgA family. CidA subfamily.

The protein localises to the cell membrane. In terms of biological role, increases the activity of extracellular murein hydrolases possibly by mediating their export via hole formation. Inhibited by the antiholin-like proteins LrgAB. In an unstressed cell, the LrgAB products probably inhibit the function of the CidA protein. When a cell is stressed by the addition of antibiotics or by other factors in the environment, CidA possibly oligomerizes within the bacterial cell membrane, creating lesions that disrupt the proton motive force, which in turn results in loss of cell viability. These lesions are also hypothesized to regulate the subsequent cell lysis by either allowing the murein hydrolases access to the cell wall substrate and/or regulating their activity by a possible change in the cell wall pH that results from loss of membrane potential. The chain is Holin-like protein CidA from Bacillus subtilis (strain 168).